We begin with the raw amino-acid sequence, 197 residues long: UPF0251 protein CT1277 (197 aa).

The interval 138–197 is disordered; it reads GGGFGGGRRGGGKCRGFRSGLDRGPGHGEGRCQGEGHGNGNGNGNGQGRMRRNQQEGGEV. Residues 157-171 show a composition bias toward basic and acidic residues; that stretch reads GLDRGPGHGEGRCQG. Gly residues predominate over residues 172–184; that stretch reads EGHGNGNGNGNGQ.

The protein belongs to the UPF0251 family.

This Chlorobaculum tepidum (strain ATCC 49652 / DSM 12025 / NBRC 103806 / TLS) (Chlorobium tepidum) protein is UPF0251 protein CT1277.